A 167-amino-acid polypeptide reads, in one-letter code: Transcription antitermination protein NusB (167 aa).

The disordered stretch occupies residues 1–21 (MIPTDTAPPSKPAQGHKGYKN).

This sequence belongs to the NusB family.

Functionally, involved in transcription antitermination. Required for transcription of ribosomal RNA (rRNA) genes. Binds specifically to the boxA antiterminator sequence of the ribosomal RNA (rrn) operons. This Nitrosomonas eutropha (strain DSM 101675 / C91 / Nm57) protein is Transcription antitermination protein NusB.